Consider the following 267-residue polypeptide: 2-keto-3-deoxy-L-rhamnonate aldolase (267 aa).

Residue His-49 is the Proton acceptor of the active site. Residue Gln-151 coordinates substrate. Residue Glu-153 participates in Mg(2+) binding. Residues Ala-178 and Asp-179 each coordinate substrate. Position 179 (Asp-179) interacts with Mg(2+).

It belongs to the HpcH/HpaI aldolase family. KDR aldolase subfamily. As to quaternary structure, homohexamer. The cofactor is Mg(2+).

It catalyses the reaction 2-dehydro-3-deoxy-L-rhamnonate = (S)-lactaldehyde + pyruvate. In terms of biological role, catalyzes the reversible retro-aldol cleavage of 2-keto-3-deoxy-L-rhamnonate (KDR) to pyruvate and lactaldehyde. In Salmonella typhi, this protein is 2-keto-3-deoxy-L-rhamnonate aldolase.